Reading from the N-terminus, the 114-residue chain is Large ribosomal subunit protein bL20c (114 aa).

This sequence belongs to the bacterial ribosomal protein bL20 family.

It localises to the plastid. It is found in the chloroplast. Functionally, binds directly to 23S ribosomal RNA and is necessary for the in vitro assembly process of the 50S ribosomal subunit. It is not involved in the protein synthesizing functions of that subunit. This is Large ribosomal subunit protein bL20c (rpl20) from Guillardia theta (Cryptophyte).